Consider the following 434-residue polypeptide: G2/mitotic-specific cyclin-2 (434 aa).

It belongs to the cyclin family. Cyclin AB subfamily. In terms of assembly, interacts with the CDC2 protein kinase to form a serine/threonine kinase holoenzyme complex also known as maturation promoting factor (MPF). The cyclin subunit imparts substrate specificity to the complex.

Functionally, essential for the control of the cell cycle at the G2/M (mitosis) transition. The protein is G2/mitotic-specific cyclin-2 of Medicago sativa subsp. varia (Alfalfa).